The primary structure comprises 66 residues: FMRFamide-like neuropeptide 21 (66 aa).

The N-terminal stretch at 1 to 16 (MRLFILLSCLLAWVLA) is a signal peptide.

The protein belongs to the FARP (FMRFamide related peptide) family. In terms of processing, may be processed by convertase egl-3. As to expression, expressed in the ADL, ASE and ASH sensory neurons, the URA motor neurons and the MC, M2 and M4 pharyngeal neurons.

Its subcellular location is the secreted. In terms of biological role, FMRFamide-like neuropeptide. Involved in modulating locomotion quiescence during the sleep-like state called lethargus which occurs during molting between larval and adult stages, acting via the G-protein coupled receptor npr-1. Plays a role in modulating social and feeding behavior. Ligand to G-protein coupled receptor npr-1. The polypeptide is FMRFamide-like neuropeptide 21 (Caenorhabditis elegans).